A 368-amino-acid polypeptide reads, in one-letter code: Flagellar P-ring protein (368 aa).

A signal peptide spans 1-24; sequence MNSIFRKIVFAAFLLLALPQFALA.

This sequence belongs to the FlgI family. The basal body constitutes a major portion of the flagellar organelle and consists of four rings (L,P,S, and M) mounted on a central rod.

Its subcellular location is the periplasm. The protein localises to the bacterial flagellum basal body. Functionally, assembles around the rod to form the L-ring and probably protects the motor/basal body from shearing forces during rotation. This is Flagellar P-ring protein from Geotalea uraniireducens (strain Rf4) (Geobacter uraniireducens).